A 2292-amino-acid polypeptide reads, in one-letter code: Protein Ycf2 (2292 aa).

1644–1651 (GSIGTGRS) contributes to the ATP binding site.

Belongs to the Ycf2 family.

The protein resides in the plastid. Its subcellular location is the chloroplast stroma. Its function is as follows. Probable ATPase of unknown function. Its presence in a non-photosynthetic plant (Epifagus virginiana) and experiments in tobacco indicate that it has an essential function which is probably not related to photosynthesis. The polypeptide is Protein Ycf2 (Morus indica (Mulberry)).